Consider the following 78-residue polypeptide: D-alanyl carrier protein (78 aa).

The Carrier domain occupies M1 to R78. An O-(pantetheine 4'-phosphoryl)serine modification is found at S36.

The protein belongs to the DltC family. In terms of processing, 4'-phosphopantetheine is transferred from CoA to a specific serine of apo-DCP.

The protein resides in the cytoplasm. It participates in cell wall biogenesis; lipoteichoic acid biosynthesis. Carrier protein involved in the D-alanylation of lipoteichoic acid (LTA). The loading of thioester-linked D-alanine onto DltC is catalyzed by D-alanine--D-alanyl carrier protein ligase DltA. The DltC-carried D-alanyl group is further transferred to cell membrane phosphatidylglycerol (PG) by forming an ester bond, probably catalyzed by DltD. D-alanylation of LTA plays an important role in modulating the properties of the cell wall in Gram-positive bacteria, influencing the net charge of the cell wall. The chain is D-alanyl carrier protein from Staphylococcus epidermidis (strain ATCC 35984 / DSM 28319 / BCRC 17069 / CCUG 31568 / BM 3577 / RP62A).